Reading from the N-terminus, the 641-residue chain is MKETKHQHTFSIRKSAYGAASVMVASCIFVIGGGVAEANDSTTQTTTPLEVAQTSQQETHTHQTPVTSLHTATPEHVDDSKEATPLPEKAESPKTEVTVQPSSHTQEVPALHKKTQQQPAYKDKTVPESTIASKSVESNKATENEMSPVEHHASNVEKREDRLETNETTPPSVDREFSHKIINNTHVNPKTDGQTNVNVDTKTIDTVSPKDDRIDTAQPKQVDVPKENTTAQNKFTSQASDKKPTVKAAPEAVQNPENPKNKDPFVFVHGFTGFVGEVAAKGENHWGGTKANLRNHLRKAGYETYEASVSALASNHERAVELYYYLKGGRVDYGAAHSEKYGHERYGKTYEGVLKDWKPGHPVHFIGHSMGGQTIRLLEHYLRFGDKAEIAYQQQHGGIISELFKGGQDNMVTSITTIATPHNGTHASDDIGNTPTIRNILYSFAQMSSHLGTIDFGMDHWGFKRKDGESLTDYNKRIAESKIWDSEDTGLYDLTREGAEKINQKTELNPNIYYKTYTGVATHETQLGKHIADLGMEFTKILTGNYIGSVDDILWRPNDGLVSEISSQHPSDEKNISVDENSELHKGTWQVMPTMKGWDHSDFIGNDALDTKHSAIELTNFYHSISDYLMRIEKAESTKNA.

The signal sequence occupies residues 1–38; it reads MKETKHQHTFSIRKSAYGAASVMVASCIFVIGGGVAEA. 2 disordered regions span residues 41-174 and 206-246; these read STTQ…PSVD and TVSP…KPTV. Residues 53-64 are compositionally biased toward low complexity; that stretch reads QTSQQETHTHQT. Residues 73-94 are compositionally biased toward basic and acidic residues; it reads TPEHVDDSKEATPLPEKAESPK. Composition is skewed to polar residues over residues 95–106 and 127–139; these read TEVTVQPSSHTQ and PESTIASKSVESN. Residues 140-165 are compositionally biased toward basic and acidic residues; sequence KATENEMSPVEHHASNVEKREDRLET. Residues 227-239 show a composition bias toward polar residues; it reads ENTTAQNKFTSQA. The Nucleophile role is filled by S369. Residue G535 coordinates Ca(2+). D559 (charge relay system) is an active-site residue. D599 is a Ca(2+) binding site. H600 serves as the catalytic Charge relay system. Positions 602, 607, and 610 each coordinate Ca(2+).

This sequence belongs to the AB hydrolase superfamily. Lipase family. Ca(2+) is required as a cofactor.

The protein localises to the secreted. It carries out the reaction a triacylglycerol + H2O = a diacylglycerol + a fatty acid + H(+). It catalyses the reaction a 1,2-diacyl-sn-glycero-3-phosphocholine + H2O = a 2-acyl-sn-glycero-3-phosphocholine + a fatty acid + H(+). Functionally, has a broad substrate specificity hydrolyzing a variety of triglycerides and phosphatidylcholines. The sequence is that of Lipase (lip) from Staphylococcus hyicus.